Here is a 462-residue protein sequence, read N- to C-terminus: Transcription factor-like protein EUC1 (462 aa).

Disordered regions lie at residues 11–43 and 66–97; these read GFGG…TTSP and RPTD…GRIK. Serine 17 and serine 23 each carry phosphoserine. Over residues 26–35 the composition is skewed to basic and acidic residues; sequence DSERRNHDLG. A homodimerization region region spans residues 81–140; that stretch reads SASATEPTNRIGPGRIKETPETNFNAFLIAQLTRMEEQNANLKEEISLMKKEQELFFLEN. The stretch at 105-135 forms a coiled coil; the sequence is NAFLIAQLTRMEEQNANLKEEISLMKKEQEL. Disordered stretches follow at residues 190-214 and 226-289; these read QEAA…STNW and GDPR…RNRR. Polar residues predominate over residues 197 to 214; that stretch reads NPSTSTQAHQSQSRSTNW. Lysine 231 participates in a covalent cross-link: Glycyl lysine isopeptide (Lys-Gly) (interchain with G-Cter in SUMO). A phosphoserine mark is found at serine 237 and serine 249. The span at 240-251 shows a compositional bias: acidic residues; it reads ENGEYDGNESDE. Polar residues predominate over residues 252-282; it reads NATTRNLPLNNPDSVSNADDSNNQLDGTGNE. Residue threonine 254 is modified to Phosphothreonine. The GCR1 DNA-binding region stretch occupies residues 296–385; that stretch reads YKLNRAIQNV…QAIKVVENIR (90 aa). Residues 441–455 are compositionally biased toward polar residues; that stretch reads SLQQPHSIPNSSTGT. The tract at residues 441–462 is disordered; that stretch reads SLQQPHSIPNSSTGTPEHDQDT.

As to quaternary structure, homodimer. Interacts with SLX5. In terms of processing, sumoylated at Lys-231 and subsequently ubiquitinated by the SUMO-targeted ubiquitin ligase (STUbL) complex SLX5/SLX8.

It localises to the chromosome. Functionally, transcription factor-like protein that binds to specific DNA motifs called ub-HS-motif associated with several locations where proteins other than histone H2B are ubiquitinated (ub-hotspots). Ubiquitination at these sites depends on the SUMO-targeted ubiquitin ligase (STUbL) complex SLX5/SLX8 and protein turnover on the CDC48 segregase. UBC9, SIZ1, or SIZ2 sumoylate DNA-bound EUC1 to stabilize its DNA-binding. Sumoylated EUC1 acts a cofactor required for the recruitment of the SLX5/SLX8 STUbL complex via specific contacts between EUC1 and SLX5, as well as an additional SUMO-mediated interaction. SLX5/SLX8 then ubiquitinates EUC1 and presumably other targets at ub-hotspots, and the CDC48/UFD1/NPL4 complex, together with UBX4 and UBX5, removes Lys-48-linked ubiquitinated proteins from chromatin. Ubiquitinated proteins could be either degraded by the proteasome or recycled by deubiquitination. EUC1 itself does not seem to underlie extensive turnover, as it is a very stable protein. EUC1 is able to act as a transcription factor, but its function at ub-hotspots does not seem to depend on this ability. EUC1-mediated ub-hotspots are crucial during stress responses when gene expression control is impaired. In Saccharomyces cerevisiae (strain ATCC 204508 / S288c) (Baker's yeast), this protein is Transcription factor-like protein EUC1.